A 433-amino-acid chain; its full sequence is Probable beta-1,3-galactosyl-O-glycosyl-glycoprotein beta-1,6-N-acetylglucosaminyltransferase 7 (433 aa).

The Cytoplasmic portion of the chain corresponds to 1-8 (MSQLRTTK). A helical; Signal-anchor for type II membrane protein transmembrane segment spans residues 9-25 (AGLVACGMICAFIFLYL). Residues 26–433 (RNPGPEEAEA…QSHFNSQPHH (408 aa)) lie on the Extracellular side of the membrane. 4 disulfides stabilise this stretch: C57-C209, C143-C358, C164-C191, and C367-C398. N112 carries an N-linked (GlcNAc...) asparagine glycan. A disordered region spans residues 233–275 (NITPGVTPPANSKPKTGQGPPKPSPDENSYTAPNTIFKQSPPH). Positions 258 to 275 (DENSYTAPNTIFKQSPPH) are enriched in polar residues. The segment at 413-433 (VPPEPHWQFPQQSHFNSQPHH) is disordered. Over residues 421–433 (FPQQSHFNSQPHH) the composition is skewed to polar residues.

This sequence belongs to the glycosyltransferase 14 family.

Its subcellular location is the golgi apparatus membrane. The protein operates within protein modification; protein glycosylation. Its function is as follows. Probable glycosyltransferase. In Mus musculus (Mouse), this protein is Probable beta-1,3-galactosyl-O-glycosyl-glycoprotein beta-1,6-N-acetylglucosaminyltransferase 7.